An 89-amino-acid chain; its full sequence is Small ribosomal subunit protein uS15 (89 aa).

It belongs to the universal ribosomal protein uS15 family. Part of the 30S ribosomal subunit. Forms a bridge to the 50S subunit in the 70S ribosome, contacting the 23S rRNA.

In terms of biological role, one of the primary rRNA binding proteins, it binds directly to 16S rRNA where it helps nucleate assembly of the platform of the 30S subunit by binding and bridging several RNA helices of the 16S rRNA. Forms an intersubunit bridge (bridge B4) with the 23S rRNA of the 50S subunit in the ribosome. The sequence is that of Small ribosomal subunit protein uS15 from Geobacillus sp. (strain WCH70).